A 335-amino-acid polypeptide reads, in one-letter code: MSGSILLLPLAIALGLGFFIARPESTVTPVAEAPTSSPAANLTAARPAQRTATGAAPQVTAKLPASFKGTEVDGQFQLDAAGNLIIGPELRQLFDYFLSAIGEEPLKQSIERLRRHIAAQLPEPAQAQALAVLNQYLNYKRQLVDFEAQHPRVADLASMRDRLSAVRALRAHALDPATHQAFFGLEEAYDHFSLERLAIRFDPALDSDAKGRAIDQLRAGLPAELQDLLMPQLQTELREQTTALLANGAGPQQLRQLRQQLVGSEAADRLEALDLQRRQWQQRVASYQQERTRIETARGLDEVERRAAVERLEAQRFSDSERLRLLAVVQEDRTR.

A helical membrane pass occupies residues 1 to 21 (MSGSILLLPLAIALGLGFFIA).

The protein belongs to the lipase chaperone family.

It is found in the cell inner membrane. May be involved in the folding of the extracellular lipase during its passage through the periplasm. This Stutzerimonas stutzeri (strain A1501) (Pseudomonas stutzeri) protein is Lipase chaperone.